The sequence spans 202 residues: Imidazoleglycerol-phosphate dehydratase (202 aa).

This sequence belongs to the imidazoleglycerol-phosphate dehydratase family.

Its subcellular location is the cytoplasm. The enzyme catalyses D-erythro-1-(imidazol-4-yl)glycerol 3-phosphate = 3-(imidazol-4-yl)-2-oxopropyl phosphate + H2O. The protein operates within amino-acid biosynthesis; L-histidine biosynthesis; L-histidine from 5-phospho-alpha-D-ribose 1-diphosphate: step 6/9. The polypeptide is Imidazoleglycerol-phosphate dehydratase (Sinorhizobium medicae (strain WSM419) (Ensifer medicae)).